The sequence spans 339 residues: Store-operated calcium entry-associated regulatory factor (339 aa).

An N-terminal signal peptide occupies residues 1–30 (MAAACGPGAAGYCLLLGLHLFLLTAGPALG). Over 31 to 173 (WNDPDRMLLR…KWSSADSCNM (143 aa)) the chain is Lumenal. Residues 174–194 (SGLITIVVLLGIAFVVYKLFL) traverse the membrane as a helical segment. Topologically, residues 195 to 339 (SDGQYSPPPY…ASGYGGTRRR (145 aa)) are cytoplasmic. Polar residues predominate over residues 318 to 330 (SVCSNSDTKTRTA). Residues 318-339 (SVCSNSDTKTRTASGYGGTRRR) form a disordered region.

Belongs to the SARAF family. Interacts with STIM1; the interaction is inhibited by the interaction of STIM1 with EFHB. As to expression, highly expressed in macrophages.

It localises to the endoplasmic reticulum membrane. Its function is as follows. Negative regulator of store-operated Ca(2+) entry (SOCE) involved in protecting cells from Ca(2+) overfilling. In response to cytosolic Ca(2+) elevation after endoplasmic reticulum Ca(2+) refilling, promotes a slow inactivation of STIM (STIM1 or STIM2)-dependent SOCE activity: possibly act by facilitating the deoligomerization of STIM to efficiently turn off ORAI when the endoplasmic reticulum lumen is filled with the appropriate Ca(2+) levels, and thus preventing the overload of the cell with excessive Ca(2+) ions. The polypeptide is Store-operated calcium entry-associated regulatory factor (SARAF) (Homo sapiens (Human)).